A 211-amino-acid chain; its full sequence is ATP phosphoribosyltransferase (211 aa).

This sequence belongs to the ATP phosphoribosyltransferase family. Short subfamily. Heteromultimer composed of HisG and HisZ subunits.

It is found in the cytoplasm. It catalyses the reaction 1-(5-phospho-beta-D-ribosyl)-ATP + diphosphate = 5-phospho-alpha-D-ribose 1-diphosphate + ATP. Its pathway is amino-acid biosynthesis; L-histidine biosynthesis; L-histidine from 5-phospho-alpha-D-ribose 1-diphosphate: step 1/9. Functionally, catalyzes the condensation of ATP and 5-phosphoribose 1-diphosphate to form N'-(5'-phosphoribosyl)-ATP (PR-ATP). Has a crucial role in the pathway because the rate of histidine biosynthesis seems to be controlled primarily by regulation of HisG enzymatic activity. The sequence is that of ATP phosphoribosyltransferase from Thermosynechococcus vestitus (strain NIES-2133 / IAM M-273 / BP-1).